The chain runs to 292 residues: 4,5:9,10-diseco-3-hydroxy-5,9,17-trioxoandrosta-1(10),2-diene-4-oate hydrolase (292 aa).

Residues 44 to 45 (GG), asparagine 53, asparagine 113, and arginine 192 each bind substrate. Histidine 269 serves as the catalytic Proton acceptor. Tryptophan 270 provides a ligand contact to substrate.

This sequence belongs to the AB hydrolase superfamily. HsaD family. In terms of assembly, homodimer.

It catalyses the reaction (1E,2Z)-3-hydroxy-5,9,17-trioxo-4,5:9,10-disecoandrosta-1(10),2-dien-4-oate + H2O = 3-[(3aS,4S,7aS)-7a-methyl-1,5-dioxo-octahydro-1H-inden-4-yl]propanoate + (2Z,4Z)-2-hydroxyhexa-2,4-dienoate + H(+). Its pathway is lipid metabolism; steroid biosynthesis. Functionally, catalyzes the hydrolysis of a carbon-carbon bond in 4,5: 9,10-diseco-3-hydroxy-5,9,17-trioxoandrosta-1(10),2-diene-4-oate (4,9-DSHA) to yield 9,17-dioxo-1,2,3,4,10,19-hexanorandrostan-5-oate (DOHNAA) and 2-hydroxy-hexa-2,4-dienoate (HHD). Also involved in biphenyl and polychlorinated biphenyls (PCBs) degradation. In Rhodococcus jostii (strain RHA1), this protein is 4,5:9,10-diseco-3-hydroxy-5,9,17-trioxoandrosta-1(10),2-diene-4-oate hydrolase (hsaD).